The following is a 325-amino-acid chain: Probable siderophore-binding lipoprotein YfiY (325 aa).

A signal peptide spans 1–20; the sequence is MKKHISMLFVFLMAVMVLSA. The N-palmitoyl cysteine moiety is linked to residue Cys-21. Cys-21 is lipidated: S-diacylglycerol cysteine. In terms of domain architecture, Fe/B12 periplasmic-binding spans 56–325; the sequence is RIVVLTNEGT…DIETYFLKTK (270 aa). The residue at position 290 (Ser-290) is a Phosphoserine. Thr-302 bears the Phosphothreonine mark.

Belongs to the bacterial solute-binding protein 8 family. The complex is composed of one ATP-binding protein (YusV), two transmembrane proteins (YfiZ and YfhA) and a solute-binding protein (YfiY). Interacts with FloT.

It localises to the cell membrane. The protein resides in the cytoplasm. The protein localises to the membrane raft. Its function is as follows. Part of the ABC transporter complex YfiYZ/YfhA/YusV involved in import of the iron-hydroxamate siderophores schizokinen, arthrobactin and corprogen. Binds the siderophores and delivers them to the surface of YfiZ/YfhA. The polypeptide is Probable siderophore-binding lipoprotein YfiY (yfiY) (Bacillus subtilis (strain 168)).